The sequence spans 118 residues: Non-specific lipid-transfer protein 1 (118 aa).

The signal sequence occupies residues 1–25; the sequence is MAGVMKLACLLLACMIVAGPITSNA. 4 disulfides stabilise this stretch: Cys-29-Cys-76, Cys-39-Cys-53, Cys-54-Cys-100, and Cys-74-Cys-114.

The protein belongs to the plant LTP family. As to expression, expressed primarily in epidermal cells.

Its subcellular location is the secreted. The protein localises to the cell wall. In terms of biological role, plant non-specific lipid-transfer proteins transfer phospholipids as well as galactolipids across membranes. May play a role in wax or cutin deposition in the cell walls of expanding epidermal cells and certain secretory tissues. This is Non-specific lipid-transfer protein 1 (LTP1) from Arabidopsis thaliana (Mouse-ear cress).